A 290-amino-acid chain; its full sequence is Alpha-mannosidase (290 aa).

Aspartate 17 functions as the Nucleophile in the catalytic mechanism. N-linked (GlcNAc...) asparagine glycosylation is present at asparagine 64.

The protein belongs to the glycosyl hydrolase 38 family. In terms of assembly, dimer. It depends on Zn(2+) as a cofactor.

It catalyses the reaction Hydrolysis of terminal, non-reducing alpha-D-mannose residues in alpha-D-mannosides.. Its activity is regulated as follows. Inhibited by swainsonine but not by 1-desoxymannojirimycin. Liberates mannose from p-nitrophenyl-alpha-D-mannoside. This is Alpha-mannosidase from Lablab purpureus (Hyacinth bean).